Reading from the N-terminus, the 427-residue chain is Serine--tRNA ligase (427 aa).

231 to 233 is a binding site for L-serine; the sequence is TAE. 262–264 contacts ATP; sequence RSE. E285 provides a ligand contact to L-serine. 349–352 is an ATP binding site; sequence EISS. S385 is a binding site for L-serine.

Belongs to the class-II aminoacyl-tRNA synthetase family. Type-1 seryl-tRNA synthetase subfamily. Homodimer. The tRNA molecule binds across the dimer.

It is found in the cytoplasm. It catalyses the reaction tRNA(Ser) + L-serine + ATP = L-seryl-tRNA(Ser) + AMP + diphosphate + H(+). The enzyme catalyses tRNA(Sec) + L-serine + ATP = L-seryl-tRNA(Sec) + AMP + diphosphate + H(+). The protein operates within aminoacyl-tRNA biosynthesis; selenocysteinyl-tRNA(Sec) biosynthesis; L-seryl-tRNA(Sec) from L-serine and tRNA(Sec): step 1/1. In terms of biological role, catalyzes the attachment of serine to tRNA(Ser). Is also able to aminoacylate tRNA(Sec) with serine, to form the misacylated tRNA L-seryl-tRNA(Sec), which will be further converted into selenocysteinyl-tRNA(Sec). The polypeptide is Serine--tRNA ligase (Listeria welshimeri serovar 6b (strain ATCC 35897 / DSM 20650 / CCUG 15529 / CIP 8149 / NCTC 11857 / SLCC 5334 / V8)).